A 607-amino-acid chain; its full sequence is MNKQELENRQKKIRNFSIIAHIDHGKSTLADRILEKTGALTAREMKEQTLDAMDLERERGITIKLNAVKLNYTAKDGEEYILHLIDTPGHVDFTYEVSRSLAACEGAILVVDAAQGIEAQTLANVYLALDNDLEIIPVINKIDLPSADVERVRQEIEDVIGLDASDAVPTSAKAGIGIEEILEQIVELVPPPTGDPSEPLQALIFDSYYDAYRGVVASIRIVNGSVKVGDKVQMMATGKTFEVTDLGVSTPKPISVKELNVGDVGTLSASIKTVGDVRVGDTITLAKNPATSQLPGYRKMNPMVYCGLYPIDAAKYNDLREALEKLQLSDAALEFEPETSQALGFGFRCGFLGMLHMEIIQERIEREFNIDLITTAPSVIYHVTTTSGEVIHVDNPSKMPEQQKVDSIEEPYVKAAVMTPNDYVGAIMELCQKKRGTFIDMQYIDTTRVKITYEIPLSEIVYDFFDQLKSSTKGYASLDYELIGYRQSRLVKMDILLNNEVVDALSFIVHRDFAYERGKVIVEKLKALIPRMQFEVPVQAAVGTKIVARSTIKALRKNVLAKCYGGDISRKRKLLEKQKEGKKRMKMVGSVEVPQEAFMSVLSMDEE.

Residues Lys-11–Thr-193 form the tr-type G domain. Residues Asp-23–Thr-28 and Asn-140–Asp-143 each bind GTP.

This sequence belongs to the TRAFAC class translation factor GTPase superfamily. Classic translation factor GTPase family. LepA subfamily.

It localises to the cell membrane. The enzyme catalyses GTP + H2O = GDP + phosphate + H(+). Functionally, required for accurate and efficient protein synthesis under certain stress conditions. May act as a fidelity factor of the translation reaction, by catalyzing a one-codon backward translocation of tRNAs on improperly translocated ribosomes. Back-translocation proceeds from a post-translocation (POST) complex to a pre-translocation (PRE) complex, thus giving elongation factor G a second chance to translocate the tRNAs correctly. Binds to ribosomes in a GTP-dependent manner. This is Elongation factor 4 from Exiguobacterium sp. (strain ATCC BAA-1283 / AT1b).